The chain runs to 129 residues: Trefoil factor 2 (129 aa).

The N-terminal stretch at M1 to A23 is a signal peptide. Q24 is subject to Pyrrolidone carboxylic acid. 2 consecutive P-type domains span residues C29–L73 and E79–I122. 7 disulfide bridges follow: C29/C127, C31/C58, C42/C57, C52/C69, C81/C107, C91/C106, and C101/C118.

The protein resides in the secreted. Its function is as follows. Inhibits gastrointestinal motility and gastric acid secretion. Could function as a structural component of gastric mucus, possibly by stabilizing glycoproteins in the mucus gel through interactions with carbohydrate side chains. The polypeptide is Trefoil factor 2 (TFF2) (Canis lupus familiaris (Dog)).